A 715-amino-acid chain; its full sequence is MKKVVTVCPYCASGCKINLVVDNGKIVRAEAAQGKTNQGTLCLKGYYGWDFINDTQILTPRLKTPMIRRQRGGKLEPVSWDEALNYVAERLSAIKEKYGPDAIQTTGSSRGTGNETNYVMQKFARAVIGTNNVDCCARVUHGPSVAGLHQSVGNGAMSNAINEIDNTDLVFVFGYNPADSHPIVANHVINAKRNGAKIIVCDPRKIETARIADMHIALKNGSNIALLNAMGHVIIEENLYDKAFVASRTEGFEEYRKIVEGYTPESVEDITGVSASEIRQAARMYAQAKSAAILWGMGVTQFYQGVETVRSLTSLAMLTGNLGKPHAGVNPVRGQNNVQGACDMGALPDTYPGYQYVKDPANREKFAKAWGVESLPAHTGYRISELPHRAAHGEVRAAYIMGEDPLQTDAELSAVRKAFEDLELVIVQDIFMTKTASAADVILPSTSWGEHEGVFTAADRGFQRFFKAVEPKWDLKTDWQIISEIATRMGYPMHYNNTQEIWDELRHLCPDFYGATYEKMGELGFIQWPCRDTSDADQGTSYLFKEKFDTPNGLAQFFTCDWVAPIDKLTDEYPMVLSTVREVGHYSCRSMTGNCAALAALADEPGYAQINTEDAKRLGIEDEALVWVHSRKGKIITRAQVSDRPNKGAIYMTYQWWIGACNELVTENLSPITKTPEYKYCAVRVEPIADQRAAEQYVIDEYNKLKTRLREAALA.

In terms of domain architecture, 4Fe-4S Mo/W bis-MGD-type spans M1 to Q56. The [4Fe-4S] cluster site is built by C8, C11, C15, and C42. The active-site Electron donor/acceptor is the K44. Residues R110, U140, N176, D179, S180, C201, D202, R204, G221, N223, M297, Q335, D404, T408, Q428, D429, S445, D478, R581, E582, H585, S587, Y678, and K679 each coordinate Mo-bis(molybdopterin guanine dinucleotide). U140 acts as the Proton donor/acceptor in catalysis. Position 140 (U140) is a non-standard amino acid, selenocysteine.

It belongs to the prokaryotic molybdopterin-containing oxidoreductase family. As to quaternary structure, consists of two separable enzymatic activities: a formate dehydrogenase component (FDH-H) and hydrogenase-3. [4Fe-4S] cluster serves as cofactor. Mo-bis(molybdopterin guanine dinucleotide) is required as a cofactor.

The enzyme catalyses formate + A + H(+) = AH2 + CO2. Inhibited by aerobic conditions. Decomposes formic acid to hydrogen and carbon dioxide under anaerobic conditions in the absence of exogenous electron acceptors. The protein is Formate dehydrogenase H (fdhF) of Escherichia coli (strain K12).